The primary structure comprises 239 residues: Protein LIFEGUARD 2 (239 aa).

7 helical membrane passes run 41 to 61 (LLVT…SVFF), 66 to 86 (AGFA…CPLY), 96 to 116 (YLLL…TCAF), 121 to 141 (VILE…LYTF), 156 to 176 (FLFG…LFPL), 179 to 199 (ISVM…IVYD), and 213 to 233 (IWAA…LLTL).

Belongs to the BI1 family. Expressed in seedlings, roots, leaves, inflorescences and flowers.

The protein localises to the membrane. Its function is as follows. Regulates the brassinosteroid (BR) signaling pathway that mediates cell elongation and organ morphogenesis. Functionally, (Microbial infection) Facilitates the development of the powdery mildew fungus E.cruciferarum. In terms of biological role, (Microbial infection) May prevent cell death upon A.alternata f.sp. lycopersici (AAL) toxin treatment. This is Protein LIFEGUARD 2 from Arabidopsis thaliana (Mouse-ear cress).